A 347-amino-acid polypeptide reads, in one-letter code: NADH-ubiquinone oxidoreductase chain 2 (347 aa).

11 helical membrane-spanning segments follow: residues 3 to 23 (PLIM…VMTG), 25 to 45 (HWLM…PMLM), 59 to 79 (YFFT…INLM), 96 to 116 (IIMT…FWVP), 127 to 147 (GLIL…MISP), 148 to 168 (GINL…GGWG), 178 to 198 (IMAY…IYNP), 201 to 221 (TLLN…LFMI), 247 to 267 (TLLS…WMII), 276 to 296 (IVLP…YMRL), and 325 to 345 (LLTP…MMMI).

This sequence belongs to the complex I subunit 2 family. Core subunit of respiratory chain NADH dehydrogenase (Complex I) which is composed of 45 different subunits. Interacts with TMEM242.

Its subcellular location is the mitochondrion inner membrane. It carries out the reaction a ubiquinone + NADH + 5 H(+)(in) = a ubiquinol + NAD(+) + 4 H(+)(out). Its function is as follows. Core subunit of the mitochondrial membrane respiratory chain NADH dehydrogenase (Complex I) which catalyzes electron transfer from NADH through the respiratory chain, using ubiquinone as an electron acceptor. Essential for the catalytic activity and assembly of complex I. The polypeptide is NADH-ubiquinone oxidoreductase chain 2 (Ozimops beccarii (Beccari's free-tailed bat)).